The sequence spans 300 residues: Light-independent protochlorophyllide reductase iron-sulfur ATP-binding protein (300 aa).

ATP contacts are provided by residues 43–48 (GIGKST) and Lys72. Ser47 is a binding site for Mg(2+). Cys128 and Cys162 together coordinate [4Fe-4S] cluster. ATP is bound at residue 213–214 (NR).

The protein belongs to the NifH/BchL/ChlL family. As to quaternary structure, homodimer. Protochlorophyllide reductase is composed of three subunits; ChlL, ChlN and ChlB. Requires [4Fe-4S] cluster as cofactor.

The enzyme catalyses chlorophyllide a + oxidized 2[4Fe-4S]-[ferredoxin] + 2 ADP + 2 phosphate = protochlorophyllide a + reduced 2[4Fe-4S]-[ferredoxin] + 2 ATP + 2 H2O. It participates in porphyrin-containing compound metabolism; chlorophyll biosynthesis (light-independent). In terms of biological role, component of the dark-operative protochlorophyllide reductase (DPOR) that uses Mg-ATP and reduced ferredoxin to reduce ring D of protochlorophyllide (Pchlide) to form chlorophyllide a (Chlide). This reaction is light-independent. The L component serves as a unique electron donor to the NB-component of the complex, and binds Mg-ATP. This chain is Light-independent protochlorophyllide reductase iron-sulfur ATP-binding protein, found in Synechococcus sp. (strain RCC307).